The sequence spans 379 residues: Dual-specificity RNA methyltransferase RlmN (379 aa).

The Proton acceptor role is filled by Glu90. The region spanning Glu96 to Asp348 is the Radical SAM core domain. Cysteines 103 and 353 form a disulfide. Residues Cys110, Cys114, and Cys117 each coordinate [4Fe-4S] cluster. Residues Gly179–Glu180, Ser211, Ser233–His235, and Asn310 each bind S-adenosyl-L-methionine. Catalysis depends on Cys353, which acts as the S-methylcysteine intermediate.

Belongs to the radical SAM superfamily. RlmN family. It depends on [4Fe-4S] cluster as a cofactor.

It localises to the cytoplasm. It catalyses the reaction adenosine(2503) in 23S rRNA + 2 reduced [2Fe-2S]-[ferredoxin] + 2 S-adenosyl-L-methionine = 2-methyladenosine(2503) in 23S rRNA + 5'-deoxyadenosine + L-methionine + 2 oxidized [2Fe-2S]-[ferredoxin] + S-adenosyl-L-homocysteine. The catalysed reaction is adenosine(37) in tRNA + 2 reduced [2Fe-2S]-[ferredoxin] + 2 S-adenosyl-L-methionine = 2-methyladenosine(37) in tRNA + 5'-deoxyadenosine + L-methionine + 2 oxidized [2Fe-2S]-[ferredoxin] + S-adenosyl-L-homocysteine. Its function is as follows. Specifically methylates position 2 of adenine 2503 in 23S rRNA and position 2 of adenine 37 in tRNAs. m2A2503 modification seems to play a crucial role in the proofreading step occurring at the peptidyl transferase center and thus would serve to optimize ribosomal fidelity. The sequence is that of Dual-specificity RNA methyltransferase RlmN from Nitrosomonas eutropha (strain DSM 101675 / C91 / Nm57).